Here is a 315-residue protein sequence, read N- to C-terminus: Porphobilinogen deaminase (315 aa).

Cysteine 234 is modified (S-(dipyrrolylmethanemethyl)cysteine).

Belongs to the HMBS family. In terms of assembly, monomer. Requires dipyrromethane as cofactor.

The enzyme catalyses 4 porphobilinogen + H2O = hydroxymethylbilane + 4 NH4(+). It functions in the pathway porphyrin-containing compound metabolism; protoporphyrin-IX biosynthesis; coproporphyrinogen-III from 5-aminolevulinate: step 2/4. Functionally, tetrapolymerization of the monopyrrole PBG into the hydroxymethylbilane pre-uroporphyrinogen in several discrete steps. In Mycobacterium leprae (strain TN), this protein is Porphobilinogen deaminase (hemC).